The chain runs to 416 residues: Histidinol dehydrogenase (416 aa).

The NAD(+) site is built by Y117, Q178, and N201. Substrate is bound by residues T224, Q246, and H249. Zn(2+) contacts are provided by Q246 and H249. Active-site proton acceptor residues include E314 and H315. H315, D348, E402, and H407 together coordinate substrate. A Zn(2+)-binding site is contributed by D348. H407 contacts Zn(2+).

The protein belongs to the histidinol dehydrogenase family. Zn(2+) serves as cofactor.

It carries out the reaction L-histidinol + 2 NAD(+) + H2O = L-histidine + 2 NADH + 3 H(+). It participates in amino-acid biosynthesis; L-histidine biosynthesis; L-histidine from 5-phospho-alpha-D-ribose 1-diphosphate: step 9/9. Its function is as follows. Catalyzes the sequential NAD-dependent oxidations of L-histidinol to L-histidinaldehyde and then to L-histidine. The polypeptide is Histidinol dehydrogenase (Staphylococcus aureus (strain Mu50 / ATCC 700699)).